The primary structure comprises 270 residues: Pre-mRNA-splicing factor CWC23 (270 aa).

A J domain is found at 12–84 (DLYRILHIHV…EHKKEYDIWY (73 aa)).

It belongs to the DnaJ family. Associated with the spliceosome.

The protein localises to the cytoplasm. Its subcellular location is the nucleus. Functionally, involved in pre-mRNA splicing. May be involved in endoplasmic reticulum-associated protein degradation (ERAD) and required for growth at low and high temperatures. The chain is Pre-mRNA-splicing factor CWC23 (CWC23) from Kluyveromyces lactis (strain ATCC 8585 / CBS 2359 / DSM 70799 / NBRC 1267 / NRRL Y-1140 / WM37) (Yeast).